The following is a 74-amino-acid chain: Putative protein YozX (74 aa).

This is Putative protein YozX (yozX) from Bacillus subtilis (strain 168).